The sequence spans 108 residues: Putative lipid-binding protein AIR1B (108 aa).

The N-terminal stretch at 1–23 (MAPRTSLALFVSLNLLFFTCTSA) is a signal peptide. Disulfide bonds link Cys-28/Cys-55, Cys-35/Cys-54, and Cys-71/Cys-107.

This sequence belongs to the plant LTP family. PEARLI1 subfamily.

It is found in the secreted. The polypeptide is Putative lipid-binding protein AIR1B (AIR1B) (Arabidopsis thaliana (Mouse-ear cress)).